A 561-amino-acid chain; its full sequence is Developmental and secondary metabolism regulator veA (561 aa).

3 disordered regions span residues 1–23 (MANR…RITR), 41–60 (ARAC…VDPP), and 258–361 (AYAR…PQGI). Residues 12-23 (NETEHSVSRITR) are compositionally biased toward basic and acidic residues. Positions 25–233 (GKQLTYKLSV…AEQGCRVRIR (209 aa)) constitute a Velvet domain. The Nuclear localization signal motif lies at 39–44 (ERARAC). Basic and acidic residues predominate over residues 258 to 268 (AYARSSDRFTT). A compositionally biased stretch (polar residues) spans 324–339 (SHSQTPSYQSHLSFGS). A compositionally biased stretch (pro residues) spans 347-357 (PHMPPTPPPVA). Residues 438–485 (RPQTPNLPAMPPPKPLSNDYANHVVPSVECTSPGGSGGGGYDNVRGKR) form a PEST region. Residues 491–524 (GPTYGKRSHEDTFGLDDRSMQNGMRPDTEPYPAY) are disordered. Positions 497–509 (RSHEDTFGLDDRS) are enriched in basic and acidic residues.

It belongs to the velvet family. VeA subfamily. Component of the heterotrimeric velvet complex composed of laeA, veA and velB; velA acting as a bridging protein between laeA and velB. Interacts with kapA. Interacts with vosA and velc.

Its subcellular location is the nucleus. The protein resides in the cytoplasm. Functionally, component of the velvet transcription factor complex that controls sexual/asexual developmental ratio in response to light, promoting sexual development in the darkness while stimulating asexual sporulation under illumination. The velvet complex acts as a global regulator for secondary metabolite gene expression. Controls the expression of the penicillin gene cluster. Positively controls the expression of the class V chitinase chiB1. Positively controls the expression of the transcription factor atfA. Required for cell wall integrity and controls hyphal branching. The polypeptide is Developmental and secondary metabolism regulator veA (Penicillium rubens (strain ATCC 28089 / DSM 1075 / NRRL 1951 / Wisconsin 54-1255) (Penicillium chrysogenum)).